The following is a 189-amino-acid chain: Elongation factor P (189 aa).

It belongs to the elongation factor P family.

Its subcellular location is the cytoplasm. It functions in the pathway protein biosynthesis; polypeptide chain elongation. Functionally, involved in peptide bond synthesis. Stimulates efficient translation and peptide-bond synthesis on native or reconstituted 70S ribosomes in vitro. Probably functions indirectly by altering the affinity of the ribosome for aminoacyl-tRNA, thus increasing their reactivity as acceptors for peptidyl transferase. This is Elongation factor P from Campylobacter jejuni subsp. doylei (strain ATCC BAA-1458 / RM4099 / 269.97).